The chain runs to 64 residues: Translation machinery-associated protein 7 homolog (64 aa).

The segment at Met1–Lys64 is disordered. Positions Val27–Lys44 are enriched in basic and acidic residues.

The protein belongs to the TMA7 family.

The protein is Translation machinery-associated protein 7 homolog of Anopheles funestus (African malaria mosquito).